The following is a 199-amino-acid chain: Recombination protein RecR (199 aa).

The segment at 58–73 adopts a C4-type zinc-finger fold; that stretch reads CKICFNITDKEVCDIC. A Toprim domain is found at 81-176; sequence STICVVSHPM…KVTRIAHGIP (96 aa).

It belongs to the RecR family.

May play a role in DNA repair. It seems to be involved in an RecBC-independent recombinational process of DNA repair. It may act with RecF and RecO. In Caldanaerobacter subterraneus subsp. tengcongensis (strain DSM 15242 / JCM 11007 / NBRC 100824 / MB4) (Thermoanaerobacter tengcongensis), this protein is Recombination protein RecR.